We begin with the raw amino-acid sequence, 874 residues long: Chaperone protein ClpB 1 (874 aa).

One can recognise a Clp R domain in the interval 6-148; it reads PNQFTEKAWE…RQIIQQIRGS (143 aa). Repeat stretches follow at residues 9–73 and 85–148; these read FTEK…IARQ and LGRS…IRGS. The tract at residues 161-342 is NBD1; it reads EALEKYGRDL…RRFQQVFVDQ (182 aa). 208–215 provides a ligand contact to ATP; the sequence is GEPGVGKT. The segment at 343–551 is linker; it reads PTVEDTISIL…IAEIISKWTG (209 aa). A coiled-coil region spans residues 393-527; it reads IDLVDESAAR…MEGGLATTHT (135 aa). The interval 561 to 772 is NBD2; the sequence is EMQKLLNLDE…RVDETIIFHS (212 aa). 611 to 618 is a binding site for ATP; it reads GPTGVGKT. The interval 773 to 874 is C-terminal; the sequence is LRKDQLQQIV…IATPTAVPLS (102 aa).

It belongs to the ClpA/ClpB family. As to quaternary structure, homohexamer. The oligomerization is ATP-dependent.

The protein resides in the cytoplasm. Its function is as follows. Part of a stress-induced multi-chaperone system, it is involved in the recovery of the cell from heat-induced damage, in cooperation with DnaK, DnaJ and GrpE. Acts before DnaK, in the processing of protein aggregates. Protein binding stimulates the ATPase activity; ATP hydrolysis unfolds the denatured protein aggregates, which probably helps expose new hydrophobic binding sites on the surface of ClpB-bound aggregates, contributing to the solubilization and refolding of denatured protein aggregates by DnaK. Necessary for thermotolerance. This chain is Chaperone protein ClpB 1 (clpB1), found in Synechococcus elongatus (strain ATCC 33912 / PCC 7942 / FACHB-805) (Anacystis nidulans R2).